The chain runs to 179 residues: Adenine phosphoribosyltransferase (179 aa).

It belongs to the purine/pyrimidine phosphoribosyltransferase family. In terms of assembly, homodimer.

It localises to the cytoplasm. It catalyses the reaction AMP + diphosphate = 5-phospho-alpha-D-ribose 1-diphosphate + adenine. It participates in purine metabolism; AMP biosynthesis via salvage pathway; AMP from adenine: step 1/1. Catalyzes a salvage reaction resulting in the formation of AMP, that is energically less costly than de novo synthesis. The polypeptide is Adenine phosphoribosyltransferase (Helicobacter pylori (strain G27)).